The following is a 283-amino-acid chain: Elongation factor Ts (283 aa).

An involved in Mg(2+) ion dislocation from EF-Tu region spans residues Thr80–Val83.

The protein belongs to the EF-Ts family.

The protein localises to the cytoplasm. Functionally, associates with the EF-Tu.GDP complex and induces the exchange of GDP to GTP. It remains bound to the aminoacyl-tRNA.EF-Tu.GTP complex up to the GTP hydrolysis stage on the ribosome. The protein is Elongation factor Ts of Enterobacter sp. (strain 638).